The chain runs to 205 residues: Protein-L-isoaspartate O-methyltransferase (205 aa).

Residue Ser-52 is part of the active site.

Belongs to the methyltransferase superfamily. L-isoaspartyl/D-aspartyl protein methyltransferase family.

Its subcellular location is the cytoplasm. The enzyme catalyses [protein]-L-isoaspartate + S-adenosyl-L-methionine = [protein]-L-isoaspartate alpha-methyl ester + S-adenosyl-L-homocysteine. Functionally, catalyzes the methyl esterification of L-isoaspartyl residues in peptides and proteins that result from spontaneous decomposition of normal L-aspartyl and L-asparaginyl residues. It plays a role in the repair and/or degradation of damaged proteins. In Gloeobacter violaceus (strain ATCC 29082 / PCC 7421), this protein is Protein-L-isoaspartate O-methyltransferase.